We begin with the raw amino-acid sequence, 133 residues long: Vesicle transport protein GOT1A (133 aa).

The Cytoplasmic portion of the chain corresponds to Met-1–Lys-9. A helical transmembrane segment spans residues Ile-10–Phe-30. A topological domain (lumenal) is located at residue Asp-31. Residues Ser-32–Leu-52 traverse the membrane as a helical segment. Topologically, residues Arg-53–Thr-68 are cytoplasmic. The helical transmembrane segment at Ser-69–Leu-89 threads the bilayer. Over Glu-90 to Tyr-92 the chain is Lumenal. The chain crosses the membrane as a helical span at residues Gly-93–Phe-113. The Cytoplasmic segment spans residues Asn-114–Val-133.

It belongs to the GOT1 family.

Its subcellular location is the golgi apparatus membrane. Functionally, may be involved in fusion of ER-derived transport vesicles with the Golgi complex. The sequence is that of Vesicle transport protein GOT1A from Mus musculus (Mouse).